The following is a 25-amino-acid chain: Glutamine synthetase 2 isozyme (25 aa).

The protein belongs to the glutamine synthetase family. As to quaternary structure, homohexamer.

It localises to the plastid. It is found in the chloroplast. The catalysed reaction is L-glutamate + NH4(+) + ATP = L-glutamine + ADP + phosphate + H(+). Functionally, plays a key role in the nitrogen metabolism of microorganisms, animals and plants. This Emiliania huxleyi (Coccolithophore) protein is Glutamine synthetase 2 isozyme.